A 207-amino-acid chain; its full sequence is LexA repressor (207 aa).

A DNA-binding region (H-T-H motif) is located at residues 28-48; the sequence is VREIGEAVGLASSSTVHGHLS. Catalysis depends on for autocatalytic cleavage activity residues Ser-130 and Lys-168.

Belongs to the peptidase S24 family. As to quaternary structure, homodimer.

It catalyses the reaction Hydrolysis of Ala-|-Gly bond in repressor LexA.. Represses a number of genes involved in the response to DNA damage (SOS response), including recA and lexA. In the presence of single-stranded DNA, RecA interacts with LexA causing an autocatalytic cleavage which disrupts the DNA-binding part of LexA, leading to derepression of the SOS regulon and eventually DNA repair. In Staphylococcus aureus (strain Mu3 / ATCC 700698), this protein is LexA repressor.